Here is a 242-residue protein sequence, read N- to C-terminus: ATP synthase subunit b 2 (242 aa).

A helical transmembrane segment spans residues 4-24 (LLAISSLTLLASLVLLVVSPA). The segment at 43–74 (ADSEDGDHDHDHEGDDHGHDEAAGDEHGHGDG) is disordered. A compositionally biased stretch (basic and acidic residues) spans 49–74 (DHDHDHEGDDHGHDEAAGDEHGHGDG).

Belongs to the ATPase B chain family. As to quaternary structure, F-type ATPases have 2 components, F(1) - the catalytic core - and F(0) - the membrane proton channel. F(1) has five subunits: alpha(3), beta(3), gamma(1), delta(1), epsilon(1). F(0) has three main subunits: a(1), b(2) and c(10-14). The alpha and beta chains form an alternating ring which encloses part of the gamma chain. F(1) is attached to F(0) by a central stalk formed by the gamma and epsilon chains, while a peripheral stalk is formed by the delta and b chains.

Its subcellular location is the cell inner membrane. F(1)F(0) ATP synthase produces ATP from ADP in the presence of a proton or sodium gradient. F-type ATPases consist of two structural domains, F(1) containing the extramembraneous catalytic core and F(0) containing the membrane proton channel, linked together by a central stalk and a peripheral stalk. During catalysis, ATP synthesis in the catalytic domain of F(1) is coupled via a rotary mechanism of the central stalk subunits to proton translocation. In terms of biological role, component of the F(0) channel, it forms part of the peripheral stalk, linking F(1) to F(0). This is ATP synthase subunit b 2 from Rhodopirellula baltica (strain DSM 10527 / NCIMB 13988 / SH1).